The sequence spans 410 residues: Sporulation killing factor maturation protein SkfB (410 aa).

The Radical SAM core domain maps to 103–314 (SYLPISCTLQ…LREARHKWGD (212 aa)). Residues Cys-117, Cys-121, Cys-124, Cys-380, Cys-385, and Cys-387 each contribute to the [4Fe-4S] cluster site.

The protein belongs to the radical SAM superfamily. [4Fe-4S] cluster serves as cofactor.

It is found in the cytoplasm. In terms of biological role, catalyzes the formation of the thioether bond required for production of the sporulation killing factor (SKF) from SkfA. Forms the cysteine-methionine thioether bond found in SKF; the acceptor amino acid can be hydrophobic, aromatic or a small hydrophilic amino acid but not a larger hydrophilic amino acid, i.e. Met=Ala, Phe, Leu, Tyr&gt;Asn, Ser&gt;&gt;Gln, Glu, Lys. The relative position of Cys and Met in the substrate cannot be inverted, in vitro the thioether bond cannot be made in the absence of the SkfA propeptide, suggesting this is the first reaction in SKF maturation. In vitro, in the absence of a second substrate, cleaves S-adenosyl-L-methionine into Met and 5'-dA. This Bacillus subtilis (strain 168) protein is Sporulation killing factor maturation protein SkfB.